A 297-amino-acid chain; its full sequence is Large ribosomal subunit protein uL18 (297 aa).

Belongs to the universal ribosomal protein uL18 family. As to quaternary structure, component of the large ribosomal subunit (LSU).

It is found in the cytoplasm. It localises to the nucleus. In terms of biological role, component of the ribosome, a large ribonucleoprotein complex responsible for the synthesis of proteins in the cell. The small ribosomal subunit (SSU) binds messenger RNAs (mRNAs) and translates the encoded message by selecting cognate aminoacyl-transfer RNA (tRNA) molecules. The large subunit (LSU) contains the ribosomal catalytic site termed the peptidyl transferase center (PTC), which catalyzes the formation of peptide bonds, thereby polymerizing the amino acids delivered by tRNAs into a polypeptide chain. The nascent polypeptides leave the ribosome through a tunnel in the LSU and interact with protein factors that function in enzymatic processing, targeting, and the membrane insertion of nascent chains at the exit of the ribosomal tunnel. The sequence is that of Large ribosomal subunit protein uL18 (RpL5) from Aedes aegypti (Yellowfever mosquito).